Here is a 504-residue protein sequence, read N- to C-terminus: Sodium-coupled neutral amino acid transporter 3 (504 aa).

Asn-74 is a glycosylation site (N-linked (GlcNAc...) asparagine). Helical transmembrane passes span 83 to 103 (GILG…LFLL), 106 to 126 (VALL…VVGI), 144 to 164 (AAAL…LYII), 187 to 207 (MNGN…LALM), and 213 to 233 (LGYS…AVIY). An intrachain disulfide couples Cys-240 to Cys-275. N-linked (GlcNAc...) asparagine glycans are attached at residues Asn-247, Asn-248, Asn-252, and Asn-323. 5 helical membrane-spanning segments follow: residues 324–344 (LSIA…YLTF), 366–386 (ILCV…IVLF), 408–428 (VLIA…APNI), 431–451 (IFGV…PAIF), and 471–491 (ALCF…FIII).

This sequence belongs to the amino acid/polyamine transporter 2 family.

The protein resides in the cell membrane. The protein localises to the basolateral cell membrane. The catalysed reaction is L-glutamine(out) + Na(+)(out) + H(+)(in) = L-glutamine(in) + Na(+)(in) + H(+)(out). It catalyses the reaction L-asparagine(out) + Na(+)(out) + H(+)(in) = L-asparagine(in) + Na(+)(in) + H(+)(out). It carries out the reaction L-histidine(out) + Na(+)(out) + H(+)(in) = L-histidine(in) + Na(+)(in) + H(+)(out). Its function is as follows. Symporter that cotransports specific neutral amino acids and sodium ions, coupled to an H(+) antiporter activity. Mainly participates in the glutamate-GABA-glutamine cycle in brain where it transports L-glutamine from astrocytes in the intercellular space for the replenishment of both neurotransmitters glutamate and gamma-aminobutyric acid (GABA) in neurons and also functions as the major influx transporter in ganglion cells mediating the uptake of glutamine. The transport activity is specific for L-glutamine, L-histidine and L-asparagine. The transport is electroneutral coupled to the cotransport of 1 Na(+) and the antiport of 1 H(+). The transport is pH dependent, saturable, Li(+) tolerant and functions in both direction depending on the concentration gradients of its substrates and cotransported ions. Also mediates an amino acid-gated H(+) conductance that is not stoichiometrically coupled to the amino acid transport but which influences the ionic gradients that drive the amino acid transport. In addition, may play a role in nitrogen metabolism, amino acid homeostasis, glucose metabolism and renal ammoniagenesis. This Homo sapiens (Human) protein is Sodium-coupled neutral amino acid transporter 3.